A 566-amino-acid chain; its full sequence is Sodium-dependent high-affinity dicarboxylate transporter 3 (566 aa).

The next 12 helical transmembrane spans lie at 55-75 (LVLV…GPEW), 92-112 (VMPL…VGVL), 123-139 (NDTN…AAAV), 162-182 (WIML…SNTA), 219-239 (MATG…TGTA), 268-288 (WIFF…MTLV), 329-349 (ILLS…GVFF), 352-372 (GAYT…VLPS), 400-420 (ETFP…AAGV), 439-459 (LPLW…TNIC), 496-516 (FAFI…SGMV), and 521-541 (MAFV…LYMN).

This sequence belongs to the SLC13A/DASS transporter (TC 2.A.47) family. NADC subfamily. As to expression, nad-1 and nad-2 are coexpressed in the intestinal tract from early larvae to adults, expression is from the pharynx through to the anus. Expression level is significantly greater in the anterior half of the intestine than in the posterior half.

It is found in the membrane. In terms of biological role, high-affinity sodium-dicarboxylate cotransporter that accepts a range of tricarboxylic acid-cycle intermediates with 4-5 carbon atoms. There is no interaction with monocarboxylates. Plays a role in the regulation of life span. This Caenorhabditis elegans protein is Sodium-dependent high-affinity dicarboxylate transporter 3 (nac-3).